Consider the following 473-residue polypeptide: Ribulose bisphosphate carboxylase large chain (473 aa).

Positions 116 and 166 each coordinate substrate. Lys-168 functions as the Proton acceptor in the catalytic mechanism. Residue Lys-170 participates in substrate binding. Residues Lys-194, Asp-196, and Glu-197 each contribute to the Mg(2+) site. Position 194 is an N6-carboxylysine (Lys-194). Catalysis depends on His-287, which acts as the Proton acceptor. Substrate contacts are provided by Arg-288, His-320, and Ser-372.

The protein belongs to the RuBisCO large chain family. Type I subfamily. Heterohexadecamer of 8 large chains and 8 small chains. Mg(2+) is required as a cofactor.

It catalyses the reaction 2 (2R)-3-phosphoglycerate + 2 H(+) = D-ribulose 1,5-bisphosphate + CO2 + H2O. The catalysed reaction is D-ribulose 1,5-bisphosphate + O2 = 2-phosphoglycolate + (2R)-3-phosphoglycerate + 2 H(+). Its function is as follows. RuBisCO catalyzes two reactions: the carboxylation of D-ribulose 1,5-bisphosphate, the primary event in carbon dioxide fixation, as well as the oxidative fragmentation of the pentose substrate. Both reactions occur simultaneously and in competition at the same active site. The chain is Ribulose bisphosphate carboxylase large chain from Alkalilimnicola ehrlichii (strain ATCC BAA-1101 / DSM 17681 / MLHE-1).